The primary structure comprises 562 residues: Formate--tetrahydrofolate ligase (562 aa).

77-84 serves as a coordination point for ATP; the sequence is TPAGEGKS.

The protein belongs to the formate--tetrahydrofolate ligase family.

It carries out the reaction (6S)-5,6,7,8-tetrahydrofolate + formate + ATP = (6R)-10-formyltetrahydrofolate + ADP + phosphate. It participates in one-carbon metabolism; tetrahydrofolate interconversion. In Corynebacterium jeikeium (strain K411), this protein is Formate--tetrahydrofolate ligase.